Reading from the N-terminus, the 364-residue chain is Trans-enoyl reductase traG (364 aa).

An NADP(+)-binding site is contributed by 51–54 (VDAK). Substrate is bound at residue 136–143 (LGLFTAGL). NADP(+) is bound by residues 176–179 (STAT), 199–202 (SKAN), Y217, and 264–265 (LE). 286-290 (ALTVF) lines the substrate pocket. 355 to 356 (MS) is an NADP(+) binding site.

This sequence belongs to the zinc-containing alcohol dehydrogenase family. Monomer.

It participates in secondary metabolite biosynthesis. Its function is as follows. Trans-enoyl reductase; part of the tra gene cluster that produces terrestric acid. The clavatol biosynthesis cluster cla and the terrestric acid cluster tra are both involved in the production of peniphenones and penilactones. The non-reducing PKS claF is responsible for the formation of clavatol from successive condensations of 3 malonyl-CoA units, presumably with a simple acetyl-CoA starter unit, and 2 methylation steps. The esterase claE probably collaborates with claF by catalyzing the hydrolysis of ACP-bound acyl intermediates to free the ACP from stalled intermediates. The clavatol oxidase claD then converts clavatol to hydroxyclavatol. Spontaneous dehydration of hydroxyclavatol leads to the accumulation of the highly active ortho-quinone methide. On the other hand, the PKS-NRPS hybrid traA is involved in the formation of crustosic acid, with the help of traB and traD. The polyketide synthase module (PKS) of traA is responsible for the synthesis of the polyketide backbone via the condensation of an acetyl-CoA starter unit with 3 malonyl-CoA units. The downstream nonribosomal peptide synthetase (NRPS) module then amidates the carboxyl end of the polyketide with L-malic acid. Because traA lacks a designated enoylreductase (ER) domain, the required activity is provided the enoyl reductase traG. Crustosic acid undergoes decarboxylation and isomerization to the terrestric acid, catalyzed by the 2-oxoglutarate-dependent dioxygenase traH. Both acids are further converted to the 2 gamma-butyrolactones (R)-5-methyltetronic acid and (S)-5-carboxylmethyltetronic acid, with involvement of the cytochrome P450 monooxygenase claJ. Spontaneous addition of the methide to these gamma-butyrolactones leads to peniphenone D and penilactone D, which undergo again stereospecific attacking by methide to give penilactones A and B. This Penicillium crustosum (Blue mold fungus) protein is Trans-enoyl reductase traG.